The following is a 296-amino-acid chain: Stanniocalcin-2 (296 aa).

Positions 1-24 are cleaved as a signal peptide; it reads MCAERLGQFVTLALVFATLDPARG. Residues 22–44 are disordered; that stretch reads ARGTDSTNPPEGPQDRGSQQKGR. Asparagine 73 carries N-linked (GlcNAc...) asparagine glycosylation. A disordered region spans residues 236–296; that stretch reads RPYHRDTDHH…EQSEYSDIRR (61 aa). A compositionally biased stretch (basic and acidic residues) spans 238 to 258; sequence YHRDTDHHLTANRGAKGERGS.

The protein belongs to the stanniocalcin family. As to quaternary structure, homodimer; disulfide-linked. In terms of tissue distribution, expressed in a variety of tissues. Strongly expressed in ovary and to a lesser extent in kidney.

The protein localises to the secreted. Has an anti-hypocalcemic action on calcium and phosphate homeostasis. This is Stanniocalcin-2 (Stc2) from Rattus norvegicus (Rat).